The primary structure comprises 159 residues: Cyclic pyranopterin monophosphate synthase (159 aa).

Substrate is bound by residues 76–78 (MCH) and 114–115 (ME). D129 is an active-site residue.

Belongs to the MoaC family. Homohexamer; trimer of dimers.

It carries out the reaction (8S)-3',8-cyclo-7,8-dihydroguanosine 5'-triphosphate = cyclic pyranopterin phosphate + diphosphate. Its pathway is cofactor biosynthesis; molybdopterin biosynthesis. Catalyzes the conversion of (8S)-3',8-cyclo-7,8-dihydroguanosine 5'-triphosphate to cyclic pyranopterin monophosphate (cPMP). This is Cyclic pyranopterin monophosphate synthase from Natranaerobius thermophilus (strain ATCC BAA-1301 / DSM 18059 / JW/NM-WN-LF).